The chain runs to 438 residues: Protein translocase subunit SecY (438 aa).

A helical membrane pass occupies residues 1-43; sequence MKIKPILELIPEVKRPLKGVSFKEKIQWTGLVLILYFILGTID. Topologically, residues 44–54 are extracellular; the sequence is IYMGGAEMPAM. Residues 55-62 constitute an intramembrane region (helical); the sequence is FAFWQTVT. Residues 55 to 83 traverse the membrane as a discontinuously helical segment; that stretch reads FAFWQTVTASKMGTLITLGIGPIVTAGII. The stretch at 63-74 is an intramembrane region; sequence ASKMGTLITLGI. An intramembrane region (helical) is located at residues 75-83; the sequence is GPIVTAGII. The Cytoplasmic portion of the chain corresponds to 84–104; it reads MQLLVGSELISLDLSKPMNRA. A helical transmembrane segment spans residues 105–129; sequence LFQGLQKLFGIFLCFLEAVMFVGAG. Over 130-136 the chain is Extracellular; that stretch reads AFGVVNS. The chain crosses the membrane as a helical span at residues 137–161; that stretch reads TLALILVLQLALGAILVIYLDEIVS. Residues 162–167 are Cytoplasmic-facing; the sequence is RYGIGS. Residues 168–186 form a helical membrane-spanning segment; that stretch reads GIGLFIAAGVAQTIFVGAF. Residues 187–209 lie on the Extracellular side of the membrane; the sequence is GAEGYLWKFFSAMSVGSLGIAFE. A helical membrane pass occupies residues 210 to 231; that stretch reads YILPILSTLFVFLVVVYVESIR. The Cytoplasmic portion of the chain corresponds to 232-256; sequence VEIPLAHGRVKGAVGKYPIKFIYVS. The helical transmembrane segment at 257–278 threads the bilayer; it reads NLPVILAAALFANIQLWGMFLD. The Extracellular portion of the chain corresponds to 279–315; sequence RMGYPILGQYSNGTAVSGIAYYFSTPYGISNIISDPL. The chain crosses the membrane as a helical span at residues 316 to 335; it reads HAIFYTLMMVIFCILFGLFW. Over 336–378 the chain is Cytoplasmic; the sequence is VETSGLDAKSMAKKLGNLDMAIKGFRKSQKSIEQRLKRYIKPI. A helical membrane pass occupies residues 379-397; it reads TVMGSAFVGFLAAAADFTG. Residues 398–400 lie on the Extracellular side of the membrane; the sequence is ALG. The helical transmembrane segment at 401–415 threads the bilayer; the sequence is GGTGVLLTVSIVYRL. The Cytoplasmic portion of the chain corresponds to 416–438; it reads YEQLVQEQLSELHPAVAKFVGKR.

The protein belongs to the SecY/SEC61-alpha family. In terms of assembly, component of the Sec protein translocase complex. Heterotrimer consisting of alpha (SecY), beta (SecG) and gamma (SecE) subunits. The heterotrimers can form oligomers, although 1 heterotrimer is thought to be able to translocate proteins. Interacts with the ribosome. May interact with SecDF, and other proteins may be involved.

Its subcellular location is the cell membrane. In terms of biological role, the central subunit of the protein translocation channel SecYEG. Consists of two halves formed by TMs 1-5 and 6-10. These two domains form a lateral gate at the front which open onto the bilayer between TMs 2 and 7, and are clamped together by SecE at the back. The channel is closed by both a pore ring composed of hydrophobic SecY resides and a short helix (helix 2A) on the extracellular side of the membrane which forms a plug. The plug probably moves laterally to allow the channel to open. The ring and the pore may move independently. This chain is Protein translocase subunit SecY, found in Methanococcus vannielii.